The following is a 540-amino-acid chain: Zinc finger protein 768 (540 aa).

Disordered regions lie at residues 1–166 (MERE…FEAQ) and 239–258 (TGAL…GQGP). Phosphoserine is present on residues Ser17, Ser18, and Ser23. The residue at position 27 (Tyr27) is a Phosphotyrosine. Ser33 is modified (phosphoserine). Over residues 34-53 (ENEEEEISQQEGSGDYEVEE) the composition is skewed to acidic residues. A phosphoserine mark is found at Ser62, Ser69, Ser76, Ser83, Ser90, Ser97, Ser104, Ser107, Ser111, Ser118, and Ser125. Residues 62–77 (SPGFEPQSPEFEPQSP) show a composition bias toward low complexity. Over residues 107 to 119 (SDSQSPEFESQSP) the composition is skewed to polar residues. A Phosphotyrosine modification is found at Tyr128. Ser132 carries the post-translational modification Phosphoserine. Tyr135 carries the post-translational modification Phosphotyrosine. Position 139 is a phosphoserine (Ser139). Tyr142 carries the phosphotyrosine modification. Phosphoserine is present on residues Ser144 and Ser147. The segment covering 149 to 166 (YESQNTELKTQSPEFEAQ) has biased composition (polar residues). The residue at position 158 (Thr158) is a Phosphothreonine. Ser160 carries the phosphoserine modification. The segment at 261–283 (NICGICGKSFGRGSTLIQHQRIH) adopts a C2H2-type 1 zinc-finger fold. Residue Thr284 is modified to Phosphothreonine. Position 289 is a phosphotyrosine (Tyr289). C2H2-type zinc fingers lie at residues 289–311 (YKCE…QRTH), 317–339 (YKCP…QRTH), 345–367 (YKCP…QRTH), and 373–395 (YSCT…QRVH). Ser295 and Ser299 each carry phosphoserine. A Phosphothreonine modification is found at Thr396. C2H2-type zinc fingers lie at residues 401-423 (FSCG…ARSH), 429-451 (FKCP…ARTH), 457-479 (YSCP…QRSH), 485-507 (YRCA…HRVH), and 513-535 (YKCD…QRTH). Phosphoserine is present on Ser442.

The protein belongs to the krueppel C2H2-type zinc-finger protein family. In terms of assembly, interacts (via zinc-finger domains) with TP53 (via N-terminus); interaction might be facilitated by TP53 oligomerization state. Interacts with ELP3. May be phosphorylated at residue 'Ser-5' of the tandem heptapeptide repeats in the N-terminus. Phosphorylation might be increased upon RAS pathway activation and negatively regulate protein stability.

Its subcellular location is the nucleus. It localises to the chromosome. Functionally, binds to mammalian-wide interspersed repeat (MIRs) sequences in euchromatin and promoter regions of genes at the consensus sequence 5'-GCTGTGTG-[N20]-CCTCTCTG-3', consisting of two anchor regions connected by a linker region; the linker region probably does not contribute to the binding specificity. Required for cell homeostasis. May be involved in transcriptional regulation. The polypeptide is Zinc finger protein 768 (ZNF768) (Homo sapiens (Human)).